The primary structure comprises 73 residues: Translation initiation factor IF-1 (73 aa).

In terms of domain architecture, S1-like spans 1–73; that stretch reads MAKKDGVIEI…TRGRIVYRYK (73 aa).

It belongs to the IF-1 family. Component of the 30S ribosomal translation pre-initiation complex which assembles on the 30S ribosome in the order IF-2 and IF-3, IF-1 and N-formylmethionyl-tRNA(fMet); mRNA recruitment can occur at any time during PIC assembly.

The protein resides in the cytoplasm. Its function is as follows. One of the essential components for the initiation of protein synthesis. Stabilizes the binding of IF-2 and IF-3 on the 30S subunit to which N-formylmethionyl-tRNA(fMet) subsequently binds. Helps modulate mRNA selection, yielding the 30S pre-initiation complex (PIC). Upon addition of the 50S ribosomal subunit IF-1, IF-2 and IF-3 are released leaving the mature 70S translation initiation complex. This Paenarthrobacter aurescens (strain TC1) protein is Translation initiation factor IF-1.